A 217-amino-acid polypeptide reads, in one-letter code: Probable nicotinate-nucleotide adenylyltransferase (217 aa).

The protein belongs to the NadD family.

It carries out the reaction nicotinate beta-D-ribonucleotide + ATP + H(+) = deamido-NAD(+) + diphosphate. The protein operates within cofactor biosynthesis; NAD(+) biosynthesis; deamido-NAD(+) from nicotinate D-ribonucleotide: step 1/1. Its function is as follows. Catalyzes the reversible adenylation of nicotinate mononucleotide (NaMN) to nicotinic acid adenine dinucleotide (NaAD). This is Probable nicotinate-nucleotide adenylyltransferase from Moorella thermoacetica (strain ATCC 39073 / JCM 9320).